Reading from the N-terminus, the 262-residue chain is Pyridoxine 5'-phosphate synthase (262 aa).

Asn-6 contributes to the 3-amino-2-oxopropyl phosphate binding site. A 1-deoxy-D-xylulose 5-phosphate-binding site is contributed by 8-9 (DH). Arg-17 lines the 3-amino-2-oxopropyl phosphate pocket. His-43 (proton acceptor) is an active-site residue. 2 residues coordinate 1-deoxy-D-xylulose 5-phosphate: Arg-45 and His-50. Glu-70 (proton acceptor) is an active-site residue. 1-deoxy-D-xylulose 5-phosphate is bound at residue Thr-102. Catalysis depends on His-215, which acts as the Proton donor. Residues Gly-216 and 237-238 (GH) contribute to the 3-amino-2-oxopropyl phosphate site.

Belongs to the PNP synthase family. In terms of assembly, homooctamer; tetramer of dimers.

It is found in the cytoplasm. It catalyses the reaction 3-amino-2-oxopropyl phosphate + 1-deoxy-D-xylulose 5-phosphate = pyridoxine 5'-phosphate + phosphate + 2 H2O + H(+). The protein operates within cofactor biosynthesis; pyridoxine 5'-phosphate biosynthesis; pyridoxine 5'-phosphate from D-erythrose 4-phosphate: step 5/5. Its function is as follows. Catalyzes the complicated ring closure reaction between the two acyclic compounds 1-deoxy-D-xylulose-5-phosphate (DXP) and 3-amino-2-oxopropyl phosphate (1-amino-acetone-3-phosphate or AAP) to form pyridoxine 5'-phosphate (PNP) and inorganic phosphate. The chain is Pyridoxine 5'-phosphate synthase from Helicobacter pylori (strain ATCC 700392 / 26695) (Campylobacter pylori).